Reading from the N-terminus, the 208-residue chain is Attacin-A (208 aa).

A signal peptide spans 1–20 (MQSFKICFFISCLSVVLVKG). Residues 21 to 47 (QFGGTVSSNPNGGLDVNARLSKTIGDP) constitute a propeptide that is removed on maturation.

In terms of tissue distribution, hemolymph and fat body.

It localises to the secreted. Functionally, hemolymph antibacterial protein against Gram-negative bacteria. The chain is Attacin-A from Glossina morsitans morsitans (Savannah tsetse fly).